The sequence spans 313 residues: ADP-L-glycero-D-manno-heptose-6-epimerase (313 aa).

Residues 10–11, 31–32, Lys-38, Lys-53, 75–79, and Asn-92 each bind NADP(+); these read MI, DN, and EGACS. Residue Tyr-139 is the Proton acceptor of the active site. Lys-143 serves as a coordination point for NADP(+). A substrate-binding site is contributed by Asn-174. Residues Val-175 and Lys-183 each contribute to the NADP(+) site. Lys-183 serves as the catalytic Proton acceptor. Substrate is bound by residues Ser-185, His-192, 206–209, Arg-214, and Tyr-277; that span reads FEGS.

Belongs to the NAD(P)-dependent epimerase/dehydratase family. HldD subfamily. In terms of assembly, homopentamer. Requires NADP(+) as cofactor.

It catalyses the reaction ADP-D-glycero-beta-D-manno-heptose = ADP-L-glycero-beta-D-manno-heptose. It functions in the pathway nucleotide-sugar biosynthesis; ADP-L-glycero-beta-D-manno-heptose biosynthesis; ADP-L-glycero-beta-D-manno-heptose from D-glycero-beta-D-manno-heptose 7-phosphate: step 4/4. Functionally, catalyzes the interconversion between ADP-D-glycero-beta-D-manno-heptose and ADP-L-glycero-beta-D-manno-heptose via an epimerization at carbon 6 of the heptose. In Aliivibrio fischeri (strain MJ11) (Vibrio fischeri), this protein is ADP-L-glycero-D-manno-heptose-6-epimerase.